The primary structure comprises 225 residues: Probable methylthioribulose-1-phosphate dehydratase (225 aa).

Position 86 (cysteine 86) interacts with substrate. Zn(2+)-binding residues include histidine 104 and histidine 106. Glutamate 127 functions as the Proton donor/acceptor in the catalytic mechanism. Histidine 183 is a Zn(2+) binding site.

It belongs to the aldolase class II family. MtnB subfamily. It depends on Zn(2+) as a cofactor.

It localises to the cytoplasm. The enzyme catalyses 5-(methylsulfanyl)-D-ribulose 1-phosphate = 5-methylsulfanyl-2,3-dioxopentyl phosphate + H2O. It participates in amino-acid biosynthesis; L-methionine biosynthesis via salvage pathway; L-methionine from S-methyl-5-thio-alpha-D-ribose 1-phosphate: step 2/6. In terms of biological role, catalyzes the dehydration of methylthioribulose-1-phosphate (MTRu-1-P) into 2,3-diketo-5-methylthiopentyl-1-phosphate (DK-MTP-1-P). This chain is Probable methylthioribulose-1-phosphate dehydratase, found in Leishmania infantum.